The primary structure comprises 657 residues: Kinesin-like protein KIF22 (657 aa).

A disordered region spans residues 1–33 (MNVRAKKKPQQREMASASSGPSRSLSKGGVSRR). Over residues 16–33 (SASSGPSRSLSKGGVSRR) the composition is skewed to low complexity. In terms of domain architecture, Kinesin motor spans 38 to 360 (RVRVAVRLRP…LNFTARSKEV (323 aa)). 119-126 (GPTGAGKT) is a binding site for ATP. The disordered stretch occupies residues 388-415 (PSEAKKAKGPEEESTGSPESTAAPASAS). Positions 402–415 (TGSPESTAAPASAS) are enriched in low complexity. A phosphoserine mark is found at S404, S419, and S444. K457 participates in a covalent cross-link: Glycyl lysine isopeptide (Lys-Gly) (interchain with G-Cter in SUMO2). Positions 457 to 502 (KRERMVLIKTVEEKNLEIERLKMKQKELEAKVLAQEALDPKEKENT) form a coiled coil. Residues S537, S554, and S573 each carry the phosphoserine modification.

The protein belongs to the TRAFAC class myosin-kinesin ATPase superfamily. Kinesin family. Interacts with FAM83D and SIAH1. Post-translationally, ubiquitinated; mediated by SIAH1 and leading to its subsequent proteasomal degradation.

It is found in the nucleus. It localises to the cytoplasm. Its subcellular location is the cytoskeleton. Functionally, kinesin family member that is involved in spindle formation and the movements of chromosomes during mitosis and meiosis. Binds to microtubules and to DNA. Plays a role in congression of laterally attached chromosomes in NDC80-depleted cells. The chain is Kinesin-like protein KIF22 (Kif22) from Rattus norvegicus (Rat).